A 318-amino-acid polypeptide reads, in one-letter code: Death effector domain-containing protein (318 aa).

The region spanning 25–103 (SLHRMFDIVG…RHDLLPYVTL (79 aa)) is the DED domain. Positions 128-191 (PRALSDPEPR…SVTPDPKEKQ (64 aa)) are disordered.

Interacts with CASP8, CASP10, KRT8, KRT18, CASP3 and FADD. Homodimerizes and heterodimerizes with DEDD2. Exists predominantly in a mono- or diubiquitinated form. As to expression, widely expressed with highest levels in testis. Within the testis, highly expressed in germ cells but not expressed in Sertoli cells.

It is found in the cytoplasm. The protein localises to the nucleus. The protein resides in the nucleolus. In terms of biological role, a scaffold protein that directs CASP3 to certain substrates and facilitates their ordered degradation during apoptosis. May also play a role in mediating CASP3 cleavage of KRT18. Regulates degradation of intermediate filaments during apoptosis. May play a role in the general transcription machinery in the nucleus and might be an important regulator of the activity of GTF3C3. Inhibits DNA transcription in vitro. The protein is Death effector domain-containing protein (Dedd) of Rattus norvegicus (Rat).